We begin with the raw amino-acid sequence, 489 residues long: FK506-binding protein 4 (489 aa).

Disordered regions lie at residues 40 to 157 (PDET…GLEL) and 199 to 378 (GNYV…TTGT). The segment covering 66-88 (MDIDESDDDYEEDSEEDSDDEEI) has biased composition (acidic residues). Basic and acidic residues predominate over residues 93–109 (SDKEKARKLKEAAALKE). Acidic residues-rich tracts occupy residues 110–125 (LEDE…DDEN), 143–157 (TDDD…GLEL), and 208–250 (GPSE…DELD). Basic and acidic residues-rich tracts occupy residues 267 to 282 (APKL…RTAD), 292 to 303 (MMAKDGKAKGAD), and 328 to 353 (EQKK…EAKK). Positions 362-378 (QGPTPSGQKPGETTTGT) are enriched in polar residues. In terms of domain architecture, PPIase FKBP-type spans 406 to 489 (VAMRYIGKLE…IFDVKLLEIK (84 aa)).

It belongs to the FKBP-type PPIase family. FKBP3/4 subfamily. As to quaternary structure, binds to histones H3 and H4.

It localises to the nucleus. It catalyses the reaction [protein]-peptidylproline (omega=180) = [protein]-peptidylproline (omega=0). With respect to regulation, inhibited by both FK506 and rapamycin. Its function is as follows. PPIase that acts as a histone chaperone. Histone proline isomerase that increases the rate of cis-trans isomerization at prolines on the histone H3 N-terminal tail. Proline isomerization influences H3 methylation thereby regulating gene expression. This Aspergillus fumigatus (strain ATCC MYA-4609 / CBS 101355 / FGSC A1100 / Af293) (Neosartorya fumigata) protein is FK506-binding protein 4 (fpr4).